A 96-amino-acid chain; its full sequence is Aspartyl/glutamyl-tRNA(Asn/Gln) amidotransferase subunit C (96 aa).

It belongs to the GatC family. In terms of assembly, heterotrimer of A, B and C subunits.

It catalyses the reaction L-glutamyl-tRNA(Gln) + L-glutamine + ATP + H2O = L-glutaminyl-tRNA(Gln) + L-glutamate + ADP + phosphate + H(+). It carries out the reaction L-aspartyl-tRNA(Asn) + L-glutamine + ATP + H2O = L-asparaginyl-tRNA(Asn) + L-glutamate + ADP + phosphate + 2 H(+). Allows the formation of correctly charged Asn-tRNA(Asn) or Gln-tRNA(Gln) through the transamidation of misacylated Asp-tRNA(Asn) or Glu-tRNA(Gln) in organisms which lack either or both of asparaginyl-tRNA or glutaminyl-tRNA synthetases. The reaction takes place in the presence of glutamine and ATP through an activated phospho-Asp-tRNA(Asn) or phospho-Glu-tRNA(Gln). This Oceanobacillus iheyensis (strain DSM 14371 / CIP 107618 / JCM 11309 / KCTC 3954 / HTE831) protein is Aspartyl/glutamyl-tRNA(Asn/Gln) amidotransferase subunit C.